The primary structure comprises 270 residues: Probable ribosomal RNA small subunit methyltransferase A (270 aa).

S-adenosyl-L-methionine-binding residues include His-19, Leu-21, Gly-46, Glu-67, Asp-92, and Asn-107.

The protein belongs to the class I-like SAM-binding methyltransferase superfamily. rRNA adenine N(6)-methyltransferase family. RsmA subfamily.

It is found in the cytoplasm. Its function is as follows. Specifically dimethylates two adjacent adenosines in the loop of a conserved hairpin near the 3'-end of 16S rRNA in the 30S particle. May play a critical role in biogenesis of 30S subunits. This chain is Probable ribosomal RNA small subunit methyltransferase A, found in Methanococcoides burtonii (strain DSM 6242 / NBRC 107633 / OCM 468 / ACE-M).